Reading from the N-terminus, the 37-residue chain is Cytochrome b6-f complex subunit 5 (37 aa).

The chain crosses the membrane as a helical span at residues 5–25; sequence LLDGLVLGLVFATLGGLFYAA.

The protein belongs to the PetG family. In terms of assembly, the 4 large subunits of the cytochrome b6-f complex are cytochrome b6, subunit IV (17 kDa polypeptide, PetD), cytochrome f and the Rieske protein, while the 4 small subunits are PetG, PetL, PetM and PetN. The complex functions as a dimer.

It is found in the cellular thylakoid membrane. In terms of biological role, component of the cytochrome b6-f complex, which mediates electron transfer between photosystem II (PSII) and photosystem I (PSI), cyclic electron flow around PSI, and state transitions. PetG is required for either the stability or assembly of the cytochrome b6-f complex. This is Cytochrome b6-f complex subunit 5 from Mastigocladus laminosus (Fischerella sp.).